The following is a 358-amino-acid chain: Probable protein phosphatase 2C 68 (358 aa).

Positions 74–352 (RHGAASVAGR…DNISVVVVDL (279 aa)) constitute a PPM-type phosphatase domain. Residues aspartate 117, glycine 118, aspartate 298, and aspartate 343 each coordinate Mn(2+).

It belongs to the PP2C family. Mg(2+) serves as cofactor. The cofactor is Mn(2+).

The protein resides in the nucleus. It is found in the cytoplasm. It localises to the cytosol. The enzyme catalyses O-phospho-L-seryl-[protein] + H2O = L-seryl-[protein] + phosphate. The catalysed reaction is O-phospho-L-threonyl-[protein] + H2O = L-threonyl-[protein] + phosphate. Involved in the regulation of abiotic stress responses. Acts as a negative regulator of abscisic acid (ABA) signaling and positive regulator of abiotic stress signaling. May be involved in panicle development. The polypeptide is Probable protein phosphatase 2C 68 (Oryza sativa subsp. japonica (Rice)).